The following is a 488-amino-acid chain: Endoglucanase A (488 aa).

Substrate contacts are provided by residues His-59, 63–64 (WY), Tyr-90, and His-125. The Proton donor role is filled by Glu-163. Tyr-226 is a binding site for substrate. Glu-252 acts as the Nucleophile in catalysis. Residues 258 to 259 (AT), Trp-286, and 291 to 293 (KDE) each bind substrate. Disordered stretches follow at residues 326–362 (ESAS…AWDP) and 388–451 (EPGA…WDPT). Composition is skewed to pro residues over residues 332–353 (PSDP…PPSD) and 405–416 (PSEPSDPPPPSE). Residues 417–433 (PEPDPGEPDPGEPDPGE) are compositionally biased toward acidic residues.

It belongs to the glycosyl hydrolase 5 (cellulase A) family.

The enzyme catalyses Endohydrolysis of (1-&gt;4)-beta-D-glucosidic linkages in cellulose, lichenin and cereal beta-D-glucans.. This chain is Endoglucanase A (celA), found in Evansella cellulosilytica (strain ATCC 21833 / DSM 2522 / FERM P-1141 / JCM 9156 / N-4) (Bacillus cellulosilyticus).